The primary structure comprises 308 residues: 4-hydroxy-tetrahydrodipicolinate synthase (308 aa).

Thr53 contributes to the pyruvate binding site. Tyr141 functions as the Proton donor/acceptor in the catalytic mechanism. Lys169 acts as the Schiff-base intermediate with substrate in catalysis. Residue Val209 coordinates pyruvate.

This sequence belongs to the DapA family. As to quaternary structure, homotetramer; dimer of dimers.

It localises to the cytoplasm. It carries out the reaction L-aspartate 4-semialdehyde + pyruvate = (2S,4S)-4-hydroxy-2,3,4,5-tetrahydrodipicolinate + H2O + H(+). It participates in amino-acid biosynthesis; L-lysine biosynthesis via DAP pathway; (S)-tetrahydrodipicolinate from L-aspartate: step 3/4. In terms of biological role, catalyzes the condensation of (S)-aspartate-beta-semialdehyde [(S)-ASA] and pyruvate to 4-hydroxy-tetrahydrodipicolinate (HTPA). The chain is 4-hydroxy-tetrahydrodipicolinate synthase from Acidothermus cellulolyticus (strain ATCC 43068 / DSM 8971 / 11B).